Reading from the N-terminus, the 1674-residue chain is E3 ubiquitin-protein ligase SHPRH (1674 aa).

Residues 1 to 26 (MSSRRKRAPPMKVDEERQQQLHWNMH) are disordered. Residues 12–26 (KVDEERQQQLHWNMH) show a composition bias toward basic and acidic residues. Phosphoserine is present on residues serine 259 and serine 261. A Helicase ATP-binding; first part domain is found at 302–384 (YQREAVNWML…TVEVLALILT (83 aa)). 368 to 375 (DEMGLGKT) contacts ATP. The H15 domain occupies 433 to 507 (HCPPTRVMIL…GFSGTFTLGK (75 aa)). The segment at 524–548 (SPRKIEKELRKSVNKDADSEYLPSN) is disordered. Positions 526-541 (RKIEKELRKSVNKDAD) are enriched in basic and acidic residues. Serine 626 carries the post-translational modification Phosphoserine. The PHD-type zinc-finger motif lies at 649-700 (RFECICGEFDQIGHKPRVQCLKCHLWQHAKCVNYEEKNLKVKPFYCPHCLVA). Positions 701-859 (MEPVSTRATL…FGLVVFLGIE (159 aa)) constitute a Helicase ATP-binding; second part domain. Positions 810–813 (DEAQ) match the DEAQ box motif. The segment at 1423 to 1470 (CPICARQLGKQWAVLTCGHCFCNECTSIIIEQYSVGSHRSSIKCAICR) adopts an RING-type zinc-finger fold. The Helicase C-terminal domain occupies 1505 to 1663 (AVVRTLMKIQ…ASVLTVAGLA (159 aa)).

It belongs to the SNF2/RAD54 helicase family. As to quaternary structure, homodimer. Interacts with HLTF, PCNA, UBE2N and RAD18. As to expression, broadly expressed (at protein level).

It catalyses the reaction S-ubiquitinyl-[E2 ubiquitin-conjugating enzyme]-L-cysteine + [acceptor protein]-L-lysine = [E2 ubiquitin-conjugating enzyme]-L-cysteine + N(6)-ubiquitinyl-[acceptor protein]-L-lysine.. Its pathway is protein modification; protein ubiquitination. Functionally, E3 ubiquitin-protein ligase involved in DNA repair. Upon genotoxic stress, accepts ubiquitin from the UBE2N-UBE2V2 E2 complex and transfers it to 'Lys-164' of PCNA which had been monoubiquitinated by UBE2A/B-RAD18, promoting the formation of non-canonical poly-ubiquitin chains linked through 'Lys-63'. The protein is E3 ubiquitin-protein ligase SHPRH (Shprh) of Mus musculus (Mouse).